The primary structure comprises 198 residues: Holliday junction branch migration complex subunit RuvA (198 aa).

The domain I stretch occupies residues 1–61 (MYEYFEGIIQ…DNDQTLYGFE (61 aa)). A domain II region spans residues 62 to 140 (GAADKRTFNQ…TDGQPAAAAI (79 aa)). Positions 141–145 (APVAS) are flexible linker. Residues 146–198 (DVDSELADALAALVALGYPQRTVDGLTDTLKAFSAKTTDAYLREGLRLLSGKA) are domain III.

The protein belongs to the RuvA family. In terms of assembly, homotetramer. Forms an RuvA(8)-RuvB(12)-Holliday junction (HJ) complex. HJ DNA is sandwiched between 2 RuvA tetramers; dsDNA enters through RuvA and exits via RuvB. An RuvB hexamer assembles on each DNA strand where it exits the tetramer. Each RuvB hexamer is contacted by two RuvA subunits (via domain III) on 2 adjacent RuvB subunits; this complex drives branch migration. In the full resolvosome a probable DNA-RuvA(4)-RuvB(12)-RuvC(2) complex forms which resolves the HJ.

It is found in the cytoplasm. Functionally, the RuvA-RuvB-RuvC complex processes Holliday junction (HJ) DNA during genetic recombination and DNA repair, while the RuvA-RuvB complex plays an important role in the rescue of blocked DNA replication forks via replication fork reversal (RFR). RuvA specifically binds to HJ cruciform DNA, conferring on it an open structure. The RuvB hexamer acts as an ATP-dependent pump, pulling dsDNA into and through the RuvAB complex. HJ branch migration allows RuvC to scan DNA until it finds its consensus sequence, where it cleaves and resolves the cruciform DNA. The polypeptide is Holliday junction branch migration complex subunit RuvA (Lacticaseibacillus casei (strain BL23) (Lactobacillus casei)).